Consider the following 405-residue polypeptide: 2,3-diketo-5-methylthiopentyl-1-phosphate enolase (405 aa).

Residue K91 is the Proton acceptor of the active site. Substrate contacts are provided by residues K140, 166–169 (KDDE), H257, G329, and 351–352 (GG). Residues K166, D168, and E169 each coordinate Mg(2+). N6-carboxylysine is present on K166.

The protein belongs to the RuBisCO large chain family. Type IV subfamily. Homodimer. Mg(2+) is required as a cofactor.

The enzyme catalyses 5-methylsulfanyl-2,3-dioxopentyl phosphate = 2-hydroxy-5-methylsulfanyl-3-oxopent-1-enyl phosphate. It participates in amino-acid biosynthesis; L-methionine biosynthesis via salvage pathway; L-methionine from S-methyl-5-thio-alpha-D-ribose 1-phosphate: step 3/6. Functionally, catalyzes the enolization of 2,3-diketo-5-methylthiopentyl-1-phosphate (DK-MTP-1-P) into 2-hydroxy-3-keto-5-methylthiopentenyl-1-phosphate (HK-MTPenyl-1-P). This Bacillus licheniformis (strain ATCC 14580 / DSM 13 / JCM 2505 / CCUG 7422 / NBRC 12200 / NCIMB 9375 / NCTC 10341 / NRRL NRS-1264 / Gibson 46) protein is 2,3-diketo-5-methylthiopentyl-1-phosphate enolase.